A 210-amino-acid polypeptide reads, in one-letter code: Protein-L-isoaspartate O-methyltransferase (210 aa).

Ser60 is a catalytic residue.

It belongs to the methyltransferase superfamily. L-isoaspartyl/D-aspartyl protein methyltransferase family.

Its subcellular location is the cytoplasm. The enzyme catalyses [protein]-L-isoaspartate + S-adenosyl-L-methionine = [protein]-L-isoaspartate alpha-methyl ester + S-adenosyl-L-homocysteine. Catalyzes the methyl esterification of L-isoaspartyl residues in peptides and proteins that result from spontaneous decomposition of normal L-aspartyl and L-asparaginyl residues. It plays a role in the repair and/or degradation of damaged proteins. The sequence is that of Protein-L-isoaspartate O-methyltransferase from Xylella fastidiosa (strain M12).